The primary structure comprises 93 residues: MAQGQRKFQAQKPKSKAAAAERSRGPRKGGRVIGPKKARVVQQQKLKKSLEVGIRKKIEHDVVMKASSSLPKKLALLKGASKKTGATPGKTPS.

Residues 1–41 (MAQGQRKFQAQKPKSKAAAAERSRGPRKGGRVIGPKKARVV) form a disordered region. Positions 7–18 (KFQAQKPKSKAA) are enriched in low complexity. A compositionally biased stretch (basic residues) spans 25–39 (GPRKGGRVIGPKKAR).

This sequence belongs to the UPF0390 family. In terms of tissue distribution, leydig cell tumor, testis and placenta.

In terms of biological role, may have a potential role in hypercalcemia of malignancy. This Rattus norvegicus (Rat) protein is Leydig cell tumor 10 kDa protein.